A 56-amino-acid polypeptide reads, in one-letter code: Large ribosomal subunit protein bL33 (56 aa).

Belongs to the bacterial ribosomal protein bL33 family.

The polypeptide is Large ribosomal subunit protein bL33 (Marinomonas sp. (strain MWYL1)).